A 1001-amino-acid chain; its full sequence is Serine/threonine-protein kinase TAO1 (1001 aa).

Phosphoserine is present on serine 9. Residues 28 to 281 (FTDLREIGHG…SEELLKHMFV (254 aa)) enclose the Protein kinase domain. Residues 34–42 (IGHGSFGAV) and lysine 57 contribute to the ATP site. Aspartate 151 functions as the Proton acceptor in the catalytic mechanism. Disordered regions lie at residues 324–380 (PAVE…DKSE) and 404–433 (ENYQEEGDPRTRASDPQSPPQVSRHKSHYR). The segment covering 350-370 (SNQSIPSMSISASSQSSSVNS) has biased composition (low complexity). Serine 421 and serine 445 each carry phosphoserine. Residues 458–651 (SELREQMSGY…QTQKDLEHAM (194 aa)) adopt a coiled-coil conformation. The segment at 567–587 (KEELNENQSTPKKEKQEWLSK) is disordered. Basic and acidic residues predominate over residues 577–587 (PKKEKQEWLSK). Threonine 669 carries the phosphothreonine modification. The stretch at 754 to 877 (KAVLKRLKEE…LERQAREIEA (124 aa)) forms a coiled coil. The segment at 905–1001 (PGASSWSHNP…ISNGSHMSYT (97 aa)) is disordered. The span at 921 to 930 (HWGHPMGGTP) shows a compositional bias: low complexity. At serine 965 the chain carries Phosphoserine. The segment covering 975–1001 (GGRTEQGMSRSTSVTSQISNGSHMSYT) has biased composition (polar residues).

It belongs to the protein kinase superfamily. STE Ser/Thr protein kinase family. STE20 subfamily. Self-associates. Interacts with MAP2K3. Interacts with SPRED1. Interacts with TESK1; the interaction inhibits TAOK1 kinase activity. Interacts with MAP3K7. Proteolytically processed by caspase-3 (CASP3). Post-translationally, autophosphorylated. Phosphorylated by ATM in response to DNA damage. Phosphorylated by LRRK2.

It localises to the cytoplasm. It carries out the reaction L-seryl-[protein] + ATP = O-phospho-L-seryl-[protein] + ADP + H(+). It catalyses the reaction L-threonyl-[protein] + ATP = O-phospho-L-threonyl-[protein] + ADP + H(+). With respect to regulation, serine/threonine-protein kinase activity is inhibited by SPRED1. In terms of biological role, serine/threonine-protein kinase involved in various processes such as p38/MAPK14 stress-activated MAPK cascade, DNA damage response and regulation of cytoskeleton stability. Phosphorylates MAP2K3, MAP2K6 and MARK2. Acts as an activator of the p38/MAPK14 stress-activated MAPK cascade by mediating phosphorylation and subsequent activation of the upstream MAP2K3 and MAP2K6 kinases. Involved in G-protein coupled receptor signaling to p38/MAPK14. In response to DNA damage, involved in the G2/M transition DNA damage checkpoint by activating the p38/MAPK14 stress-activated MAPK cascade, probably by mediating phosphorylation of MAP2K3 and MAP2K6. Acts as a regulator of cytoskeleton stability by phosphorylating 'Thr-208' of MARK2, leading to activate MARK2 kinase activity and subsequent phosphorylation and detachment of MAPT/TAU from microtubules. Also acts as a regulator of apoptosis: regulates apoptotic morphological changes, including cell contraction, membrane blebbing and apoptotic bodies formation via activation of the MAPK8/JNK cascade. During fetal development, it plays an essential role in the regulation of neuronal differentiation and migration to the cortical plate. The chain is Serine/threonine-protein kinase TAO1 (Taok1) from Mus musculus (Mouse).